The chain runs to 297 residues: Small ribosomal subunit biogenesis GTPase RsgA (297 aa).

One can recognise a CP-type G domain in the interval 65-223 (RNELVRPPVA…VADTPGFSAI (159 aa)). GTP is bound by residues 114-117 (TKVD) and 166-174 (GQSGAGKST). Zn(2+) is bound by residues Cys247, Cys252, His254, and Cys260.

Belongs to the TRAFAC class YlqF/YawG GTPase family. RsgA subfamily. In terms of assembly, monomer. Associates with 30S ribosomal subunit, binds 16S rRNA. Zn(2+) serves as cofactor.

The protein localises to the cytoplasm. In terms of biological role, one of several proteins that assist in the late maturation steps of the functional core of the 30S ribosomal subunit. Helps release RbfA from mature subunits. May play a role in the assembly of ribosomal proteins into the subunit. Circularly permuted GTPase that catalyzes slow GTP hydrolysis, GTPase activity is stimulated by the 30S ribosomal subunit. This chain is Small ribosomal subunit biogenesis GTPase RsgA, found in Enterococcus faecalis (strain ATCC 700802 / V583).